A 496-amino-acid polypeptide reads, in one-letter code: Cytochrome P450 3A56 (496 aa).

Position 441 (Cys441) interacts with heme.

Belongs to the cytochrome P450 family. The cofactor is heme. Highly expressed in liver and intestine. Moderate expression in gill and spleen. Low expression in kidney, brain and heart.

It localises to the endoplasmic reticulum membrane. Its subcellular location is the microsome membrane. The enzyme catalyses an organic molecule + reduced [NADPH--hemoprotein reductase] + O2 = an alcohol + oxidized [NADPH--hemoprotein reductase] + H2O + H(+). Putative steroid 6-beta-hydroxylase. This chain is Cytochrome P450 3A56 (cyp3a56), found in Fundulus heteroclitus (Killifish).